We begin with the raw amino-acid sequence, 595 residues long: MSWLFGVQKNATPQIPDDFQAGAAPGGPQQPGQGQRQEGNSKMAYSFDSTALERAAKAARDLEKFPNAKEALELSRMQEVTRQKEVENETKKIEAQLANMKSEHIRVAEEERRKTLGEETKHAHSRAEYQDQLARKRAEEELAMKARMQEESLRKQEESVKKQEQLRKQTIEHELALKHKYELEKIDAETRARAKAARDNRDVNLEQMKLHEEENRKTVIEKIKTSGELIGSGLNQFLNDKTKIAAAVGGLTALAVGWYTAKRGTGVTARYIESRLGKPSLVRETSRITPLEVLKHPIKSVQMMTRQKKDPLNGVVLPPALERRLRDIAITTSNTKRNNGLFRNVMFYGPPGTGKTLFAKSLAQHSGLDYAVLTGGDIAPLGRDGVSAIHKVFDWASKSRKGLIVFIDEADAFLQKRSKNGMSEDTRAALNAFLFRTGEQSRKFMLVVASNQPEQFDWAVNDRFDQLVEFTLPGMEERERILLQYFNEHIVTPATSGSRSQRLKLDNFDWVAKCNEVAKKTSGMSGRELSKLVIGWQASAYASETGVLTEAIVDRNTADAMVQHEHKMEWLEKEQLKARNQEVKFGTTLKRETAV.

Residues 1–48 (MSWLFGVQKNATPQIPDDFQAGAAPGGPQQPGQGQRQEGNSKMAYSFD) form a disordered region. Topologically, residues 1-243 (MSWLFGVQKN…LNQFLNDKTK (243 aa)) are mitochondrial intermembrane. The span at 20–35 (QAGAAPGGPQQPGQGQ) shows a compositional bias: low complexity. Coiled coils occupy residues 80–107 (VTRQKEVENETKKIEAQLANMKSEHIRV) and 140–175 (EELAMKARMQEESLRKQEESVKKQEQLRKQTIEHEL). A helical membrane pass occupies residues 244–260 (IAAAVGGLTALAVGWYT). Residues 261–595 (AKRGTGVTAR…GTTLKRETAV (335 aa)) lie on the Mitochondrial matrix side of the membrane. Residue 349-356 (GPPGTGKT) coordinates ATP. The short motif at 592–595 (ETAV) is the PDZ-binding element.

This sequence belongs to the AAA ATPase family.

The protein localises to the mitochondrion inner membrane. It localises to the mitochondrion matrix. The protein resides in the mitochondrion nucleoid. Its function is as follows. Essential for mitochondrial network organization, mitochondrial metabolism and cell growth at organism and cellular level. Important during development for the up-regulation of mitochondrial activity during the transition to higher larval stages. Regulates mitochondrial iron homeostasis. May play an important role in mitochondrial protein synthesis. May also participate in mitochondrial DNA replication. May bind to mitochondrial DNA D-loops and contribute to nucleoid stability. Plays a role in regulating the production of reactive oxygen species in response to heat stress. In Caenorhabditis elegans, this protein is ATPase family AAA domain-containing protein 3.